Here is a 309-residue protein sequence, read N- to C-terminus: Ribosomal RNA small subunit methyltransferase H (309 aa).

S-adenosyl-L-methionine contacts are provided by residues 30-32, Asp50, Phe74, Asp96, and Gln103; that span reads GGH.

This sequence belongs to the methyltransferase superfamily. RsmH family.

The protein localises to the cytoplasm. The enzyme catalyses cytidine(1402) in 16S rRNA + S-adenosyl-L-methionine = N(4)-methylcytidine(1402) in 16S rRNA + S-adenosyl-L-homocysteine + H(+). Its function is as follows. Specifically methylates the N4 position of cytidine in position 1402 (C1402) of 16S rRNA. The polypeptide is Ribosomal RNA small subunit methyltransferase H (Wigglesworthia glossinidia brevipalpis).